The chain runs to 200 residues: uncharacterized protein (200 aa).

Residues 104 to 124 traverse the membrane as a helical segment; that stretch reads SNLLICFLFLCGLYHISVFTG.

It is found in the membrane. This is an uncharacterized protein from Escherichia coli (strain K12).